A 707-amino-acid polypeptide reads, in one-letter code: Polyribonucleotide nucleotidyltransferase (707 aa).

Mg(2+) is bound by residues Asp-488 and Asp-494. The 61-residue stretch at 555-615 folds into the KH domain; the sequence is PIIKVTKIDP…ENVDNAIALI (61 aa). Positions 625–692 constitute an S1 motif domain; the sequence is GEILEGKITR…DLGRLQFKRV (68 aa).

Belongs to the polyribonucleotide nucleotidyltransferase family. Mg(2+) is required as a cofactor.

The protein localises to the cytoplasm. It catalyses the reaction RNA(n+1) + phosphate = RNA(n) + a ribonucleoside 5'-diphosphate. Functionally, involved in mRNA degradation. Catalyzes the phosphorolysis of single-stranded polyribonucleotides processively in the 3'- to 5'-direction. In Thermotoga neapolitana (strain ATCC 49049 / DSM 4359 / NBRC 107923 / NS-E), this protein is Polyribonucleotide nucleotidyltransferase.